The primary structure comprises 376 residues: Oligopeptide transport system permease protein OppC (376 aa).

Helical transmembrane passes span 46–66 (WAILFFLLIVVIVLLAIIVPL), 149–169 (FPLLGTNGLGIDIWTLLWASV), 173–193 (LWIAVVVAIIAMVFGTIYGAV), 209–229 (IIEIIDIVPSILWIIVLGATF), 242–262 (VIFTLIFVFWTWPATTTRIYI), 297–317 (LAVVFVSLIPAVIGYEASLVF), and 341–361 (VALILSSIVSFAVLTVAARTF). The ABC transmembrane type-1 domain occupies 169 to 366 (VAKSLWIAVV…AARTFANALN (198 aa)).

This sequence belongs to the binding-protein-dependent transport system permease family. OppBC subfamily. The complex is composed of two ATP-binding proteins (OppD and OppF), two transmembrane proteins (OppB and OppC) and a solute-binding protein (OppA).

It localises to the cell membrane. Part of the ABC transporter complex OppABCDF involved in the uptake of oligopeptides. Probably responsible for the translocation of the substrate across the membrane. This Mycoplasma genitalium (strain ATCC 33530 / DSM 19775 / NCTC 10195 / G37) (Mycoplasmoides genitalium) protein is Oligopeptide transport system permease protein OppC (oppC).